A 385-amino-acid chain; its full sequence is 1-deoxy-D-xylulose 5-phosphate reductoisomerase (385 aa).

NADPH-binding residues include Thr-10, Gly-11, Ser-12, Ile-13, Asn-38, and Asn-124. Lys-125 is a 1-deoxy-D-xylulose 5-phosphate binding site. Glu-126 provides a ligand contact to NADPH. Position 150 (Asp-150) interacts with Mn(2+). Residues Ser-151, Glu-152, Ser-176, and His-199 each coordinate 1-deoxy-D-xylulose 5-phosphate. Glu-152 is a Mn(2+) binding site. An NADPH-binding site is contributed by Gly-205. 1-deoxy-D-xylulose 5-phosphate is bound by residues Ser-212, Asn-217, Lys-218, and Glu-221. Residue Glu-221 participates in Mn(2+) binding.

It belongs to the DXR family. Requires Mg(2+) as cofactor. Mn(2+) is required as a cofactor.

The enzyme catalyses 2-C-methyl-D-erythritol 4-phosphate + NADP(+) = 1-deoxy-D-xylulose 5-phosphate + NADPH + H(+). It participates in isoprenoid biosynthesis; isopentenyl diphosphate biosynthesis via DXP pathway; isopentenyl diphosphate from 1-deoxy-D-xylulose 5-phosphate: step 1/6. Catalyzes the NADPH-dependent rearrangement and reduction of 1-deoxy-D-xylulose-5-phosphate (DXP) to 2-C-methyl-D-erythritol 4-phosphate (MEP). The chain is 1-deoxy-D-xylulose 5-phosphate reductoisomerase from Clostridium acetobutylicum (strain ATCC 824 / DSM 792 / JCM 1419 / IAM 19013 / LMG 5710 / NBRC 13948 / NRRL B-527 / VKM B-1787 / 2291 / W).